The sequence spans 276 residues: Large ribosomal subunit protein uL2 (276 aa).

Residues 224 to 276 (VMNPVDHPHGGGEGKAPIGRKSPMTPWGKPTLGYKTRKKKNKSDKFIIRRRKK) form a disordered region. The span at 258–276 (KTRKKKNKSDKFIIRRRKK) shows a compositional bias: basic residues.

It belongs to the universal ribosomal protein uL2 family. Part of the 50S ribosomal subunit. Forms a bridge to the 30S subunit in the 70S ribosome.

Functionally, one of the primary rRNA binding proteins. Required for association of the 30S and 50S subunits to form the 70S ribosome, for tRNA binding and peptide bond formation. It has been suggested to have peptidyltransferase activity; this is somewhat controversial. Makes several contacts with the 16S rRNA in the 70S ribosome. The polypeptide is Large ribosomal subunit protein uL2 (Geobacillus kaustophilus (strain HTA426)).